The following is a 260-amino-acid chain: tRNA (guanine-N(7)-)-methyltransferase (260 aa).

The segment at 1–37 (MIHDPNDAGLPDQLPTPSSEAENSPAGDTTPPEEALH) is disordered. S-adenosyl-L-methionine-binding residues include E90, E115, D142, and D165. Residue D165 is part of the active site. Substrate-binding positions include K169, D201, and 236–239 (TKFE).

It belongs to the class I-like SAM-binding methyltransferase superfamily. TrmB family.

It carries out the reaction guanosine(46) in tRNA + S-adenosyl-L-methionine = N(7)-methylguanosine(46) in tRNA + S-adenosyl-L-homocysteine. It functions in the pathway tRNA modification; N(7)-methylguanine-tRNA biosynthesis. Catalyzes the formation of N(7)-methylguanine at position 46 (m7G46) in tRNA. In Paraburkholderia xenovorans (strain LB400), this protein is tRNA (guanine-N(7)-)-methyltransferase.